Here is a 257-residue protein sequence, read N- to C-terminus: Acetylglutamate kinase (257 aa).

Residues 43 to 44 (GG), Arg-65, and Asn-157 each bind substrate. ATP-binding positions include 180–185 (DVSGIL) and 208–210 (IIT).

It belongs to the acetylglutamate kinase family. ArgB subfamily. Homodimer.

It is found in the cytoplasm. It catalyses the reaction N-acetyl-L-glutamate + ATP = N-acetyl-L-glutamyl 5-phosphate + ADP. It functions in the pathway amino-acid biosynthesis; L-arginine biosynthesis; N(2)-acetyl-L-ornithine from L-glutamate: step 2/4. Catalyzes the ATP-dependent phosphorylation of N-acetyl-L-glutamate. The chain is Acetylglutamate kinase from Pectobacterium atrosepticum (strain SCRI 1043 / ATCC BAA-672) (Erwinia carotovora subsp. atroseptica).